The following is a 160-amino-acid chain: SsrA-binding protein (160 aa).

It belongs to the SmpB family.

The protein localises to the cytoplasm. Functionally, required for rescue of stalled ribosomes mediated by trans-translation. Binds to transfer-messenger RNA (tmRNA), required for stable association of tmRNA with ribosomes. tmRNA and SmpB together mimic tRNA shape, replacing the anticodon stem-loop with SmpB. tmRNA is encoded by the ssrA gene; the 2 termini fold to resemble tRNA(Ala) and it encodes a 'tag peptide', a short internal open reading frame. During trans-translation Ala-aminoacylated tmRNA acts like a tRNA, entering the A-site of stalled ribosomes, displacing the stalled mRNA. The ribosome then switches to translate the ORF on the tmRNA; the nascent peptide is terminated with the 'tag peptide' encoded by the tmRNA and targeted for degradation. The ribosome is freed to recommence translation, which seems to be the essential function of trans-translation. This is SsrA-binding protein from Pectobacterium atrosepticum (strain SCRI 1043 / ATCC BAA-672) (Erwinia carotovora subsp. atroseptica).